The chain runs to 356 residues: Arginine kinase Scy s 2 (356 aa).

Residues lysine 9–lysine 91 enclose the Phosphagen kinase N-terminal domain. Residue glycine 64–tyrosine 68 coordinates L-arginine. Positions phenylalanine 119–methionine 356 constitute a Phosphagen kinase C-terminal domain. Residues serine 122 to arginine 126 and histidine 185 contribute to the ATP site. Residue glutamate 225 participates in L-arginine binding. Arginine 229 is a binding site for ATP. Cysteine 271 provides a ligand contact to L-arginine. ATP is bound by residues arginine 280–histidine 284 and arginine 309–glutamate 314. Glutamate 314 lines the L-arginine pocket.

The protein belongs to the ATP:guanido phosphotransferase family. As to expression, muscle (at protein level).

The catalysed reaction is L-arginine + ATP = N(omega)-phospho-L-arginine + ADP + H(+). Catalyzes the reversible transfer of high energy ATP gamma-phosphate group to L-arginine. This chain is Arginine kinase Scy s 2, found in Scylla serrata (Mud crab).